Here is a 1072-residue protein sequence, read N- to C-terminus: MLLDENKGTSTIPEFGKIQFEGFCRFIDQGLIEELQNFPKIEDTDQEIESQLFGNKYELAEPLIKERNAVYQSLTYSSELYVPARLIQRNSRKIQKQTVLIGNLPLMNSQGTFVVNGISRIVVNQILRSPGIYYSSEPDQSGITLYTSTIISDWGGRSKLEIDGKTRIWARVSKKRKISIPILLSAMGSNLGEILDNVCYPKIFLSLLTERQEQKEYLRSKKNAILEFYKKLYCVSGDLVFSESLCKELRKKFLQQRCELGKIGRRNPNQKLNLDIPENEIFSLPQDVLAAVDYSIRVKFGMGTLDDMDHLKNRRIRSVADLLQNQFGLALGRLENAVRRTIRRATKRKCLPTPNNLVTSTPLTTTFQDFFGSHPLSQFLDQTNPLTEIVHRRKLSYLGPGGLTGRTASSRIRDIHPSHYGRICPIETSEGMNAGLVASLAIRARIGHCGSLQSPFHKISERSEEEHMVYLSSGEDEYYRIATGNYLALNQGIREEQVTPARYRQEFLAIAWEQIHFRSIFPFQYFSVGVSLIPFLEHNDANRALMGSNMQRQAVPLFQPEKCIVGTGLEGQAAPDSGSAAIATQGGRITYIDAGKITSSVDGDTVGTELVTYQRSNNNTCMHQKPRVRRGEYVKKGQILADGAATVGGELSLGKNILVAHMPWEGYNFEDAILISERLVYEDIYTSFHIERYGIVTCMTSQGPERITKEIPHLDAHLLRHLDGNGLVMLGSWVETGDVLVGKLTPQPAEESLRAPEGRLLQAIFGIQVSSARESCLRVPIGGRGRVIDVRWIHKEENFGDNAEVVHVYIFQKRKIQVGDKVAGRLGNKGIISKILPRQDMPYLQDGTSVDMVLNPLGVLSRMNVGQIFECLPGLAGNLMNRHYRITPFDERYEREASRKPVFPELYGASEQTANPWVFEPNHPGKNRLIDGRTGDTLEQPVTTGKAYMPKLIHQVDDKIHARSSGPYALVTQQPLRGKSKRGGQRVGEMEVWALEGFGVAYILQEMLTLKSDHIGARHEVLGAIITGGPIPRPGTAPESFRLLVRELRSLAPELDHAIIYENDFQIDRKEV.

This sequence belongs to the RNA polymerase beta chain family. In plastids the minimal PEP RNA polymerase catalytic core is composed of four subunits: alpha, beta, beta', and beta''. When a (nuclear-encoded) sigma factor is associated with the core the holoenzyme is formed, which can initiate transcription.

The protein resides in the plastid. It is found in the chloroplast. It catalyses the reaction RNA(n) + a ribonucleoside 5'-triphosphate = RNA(n+1) + diphosphate. DNA-dependent RNA polymerase catalyzes the transcription of DNA into RNA using the four ribonucleoside triphosphates as substrates. This is DNA-directed RNA polymerase subunit beta from Cycas taitungensis (Prince sago).